Here is a 146-residue protein sequence, read N- to C-terminus: Large ribosomal subunit protein uL15 (146 aa).

Positions 1–13 (MKLHELKPAEGSR) are enriched in basic and acidic residues. The interval 1-51 (MKLHELKPAEGSRKVRNRVGRGIGSGNGKTAGRGHKGQNARSGGGVRLGFE) is disordered. 2 stretches are compositionally biased toward gly residues: residues 21-31 (RGIGSGNGKTA) and 42-51 (SGGGVRLGFE).

Belongs to the universal ribosomal protein uL15 family. Part of the 50S ribosomal subunit.

In terms of biological role, binds to the 23S rRNA. This is Large ribosomal subunit protein uL15 from Bacillus mycoides (strain KBAB4) (Bacillus weihenstephanensis).